A 1147-amino-acid polypeptide reads, in one-letter code: Nucleolar protein 8 (1147 aa).

The RRM domain occupies 8–89; the sequence is KRLFVGGLGQ…GTLQIQLAKE (82 aa). Residue Lys-225 forms a Glycyl lysine isopeptide (Lys-Gly) (interchain with G-Cter in SUMO2) linkage. A phosphoserine mark is found at Ser-300 and Ser-306. Lys-316 is covalently cross-linked (Glycyl lysine isopeptide (Lys-Gly) (interchain with G-Cter in SUMO2)). Phosphotyrosine is present on Tyr-362. Phosphoserine occurs at positions 364 and 365. At Thr-367 the chain carries Phosphothreonine. Residues 379-401 are disordered; the sequence is KVKNSAESSQPERTVSKKSSFQK. Residues 383 to 400 are compositionally biased toward polar residues; the sequence is SAESSQPERTVSKKSSFQ. Ser-416 bears the Phosphoserine mark. Disordered stretches follow at residues 427-452, 472-511, 592-659, 686-741, 766-888, 932-963, and 986-1017; these read KFVNPKFPPDSSGSDSEESEEDEEYK, AGSHRKFPGKDSETNGPQNDSHCKFDTTSKNPKTSGDLYN, MENG…PLKA, KALE…EDNQ, ANLD…NEDE, KHDHAIYERKQEDKEKESKATRKKKKEEAEKL, and SNTDEKEEDVPRTEAGAREGTGKIRNAETLAC. Acidic residues predominate over residues 441-450; the sequence is DSEESEEDEE. Polar residues-rich tracts occupy residues 592–610 and 629–650; these read MENGSKCVNGSSSKLTSCQ and TFENQNHKVMSSTSCDKGSTNP. Composition is skewed to basic and acidic residues over residues 700-714 and 732-741; these read SLEKSSKVSPREDPQ and AKDKQAEDNQ. Ser-704 is modified (phosphoserine). At Thr-777 the chain carries Phosphothreonine. Phosphoserine is present on residues Ser-783 and Ser-787. Residues 799–809 are compositionally biased toward basic and acidic residues; that stretch reads CPEKELMKESV. Phosphoserine occurs at positions 819, 820, 825, 827, and 872. The segment covering 857-883 has biased composition (basic and acidic residues); that stretch reads SDERFRMDSRFLESDSEDEKKELNEDK. Coiled coils occupy residues 868 to 898 and 937 to 963; these read LESDSEDEKKELNEDKVNEDELAAEKKKTLN and IYERKQEDKEKESKATRKKKKEEAEKL. Basic and acidic residues predominate over residues 994–1011; it reads DVPRTEAGAREGTGKIRN. Lys-1038 is covalently cross-linked (Glycyl lysine isopeptide (Lys-Gly) (interchain with G-Cter in SUMO2)). A disordered region spans residues 1055–1086; sequence PNDPRFQDSSSEEEDIAEEADHSKPSPGEAVP. 4 positions are modified to phosphoserine: Ser-1063, Ser-1064, Ser-1065, and Ser-1080.

In terms of assembly, interacts with the GTP form of RRAGA, RRAGC and RRAGD. Interacts with NIP7. Interacts with DDX18; the interaction is RNA-dependent. Interacts with DDX47; the interaction is RNA-dependent. In terms of processing, phosphorylated.

Its subcellular location is the nucleus. The protein localises to the nucleolus. Functionally, plays an essential role in the survival of diffuse-type gastric cancer cells. Acts as a nucleolar anchoring protein for DDX47. May be involved in regulation of gene expression at the post-transcriptional level or in ribosome biogenesis in cancer cells. This Mus musculus (Mouse) protein is Nucleolar protein 8.